Here is a 342-residue protein sequence, read N- to C-terminus: Pre-mRNA-splicing factor 18 (342 aa).

Met1 is subject to N-acetylmethionine.

Belongs to the PRP18 family. Heterodimer with PPIH. Interacts with PRPF4 and with the spliceosome. Part of a complex containing U4/U6 snRNPs.

It is found in the nucleus speckle. Participates in the second step of pre-mRNA splicing. The polypeptide is Pre-mRNA-splicing factor 18 (Prpf18) (Mus musculus (Mouse)).